Consider the following 81-residue polypeptide: U1-sicaritoxin-Li1c (81 aa).

Positions 1–16 are excised as a propeptide; it reads ARGDAEKWESLISEER. Disulfide bonds link C18–C35, C26–C40, C34–C53, and C42–C51. Arginine amide is present on R62. Positions 66 to 81 are excised as a propeptide; sequence ALMLDPETHRLLFSED.

It belongs to the neurotoxin 28 (Litx) family. As to expression, expressed by the venom gland.

The protein resides in the secreted. Its function is as follows. Toxin active against insects (S.frugiperda larvae). May act on sodium (Nav) or calcium (Cav) channels. In Loxosceles intermedia (Brown spider), this protein is U1-sicaritoxin-Li1c.